We begin with the raw amino-acid sequence, 127 residues long: MWMGLIQLVEGVKRKDQGFLEKEFYHKTNIKMRCEFLACWPAFTVLGEAWRDQVDWSRLLRDAGLVKMSRKPRASSPLSNNHPPTPKRRGSGRHPLNPGPEALSKFPRQPGREKGPIKEVPGTKGSP.

The disordered stretch occupies residues 68-127 (MSRKPRASSPLSNNHPPTPKRRGSGRHPLNPGPEALSKFPRQPGREKGPIKEVPGTKGSP).

As to expression, weakly expressed in kidney. Expressed in various tumor cell lines including carcinomas, myeloid and lymphoid malignancies, melanomas and prostate cancer. Overexpressed in taxol-resistant breast cancer line MDA 435TR and the doxorubicin-resistant multiple myelanoma lines RPMI-8226/Dox40 and RPMI-8226/MDR10V.

Drug-resistance related protein, its expression is associated with the chemotherapy resistant and neoplastic phenotype. May also be linked to the malignant phenotype. The polypeptide is Chondrosarcoma-associated gene 2/3 protein (CSAG2) (Homo sapiens (Human)).